A 141-amino-acid polypeptide reads, in one-letter code: MPLQIFNTTKRTIDEALLAEAIQLVIGEEGGKVGSIEAIYCGNKMIRRINRDFLNHDYATDTITFGYNEGGEVEGEFYISLDVIESNARRFGVMFEDELLRVTIHSALHLMGYDDETPELRIAMSRREDLYLDRIRGASNH.

The Zn(2+) site is built by His-105, His-109, and Asp-115.

This sequence belongs to the endoribonuclease YbeY family. Zn(2+) serves as cofactor.

It localises to the cytoplasm. Single strand-specific metallo-endoribonuclease involved in late-stage 70S ribosome quality control and in maturation of the 3' terminus of the 16S rRNA. In Chlorobaculum parvum (strain DSM 263 / NCIMB 8327) (Chlorobium vibrioforme subsp. thiosulfatophilum), this protein is Endoribonuclease YbeY.